Consider the following 782-residue polypeptide: Hypersensitive to pore-forming toxin protein 40 (782 aa).

Residues 138–203 (ESEIVPGAMY…TLFVSDQFSI (66 aa)) form the Tudor; degenerate domain. Composition is skewed to polar residues over residues 332-346 (SVNP…SSSM) and 413-443 (FEST…STIQ). 4 disordered regions span residues 332-351 (SVNP…DCPY), 413-448 (FEST…NEED), 472-492 (IERP…NMSE), and 617-672 (VAQG…LEDP). Polar residues predominate over residues 617–634 (VAQGSNAPKTAPNDSVNS). Over residues 638-662 (DDIHETDKRGNHCKSVTEDPKDNKD) the composition is skewed to basic and acidic residues.

It is found in the cytoplasm. The protein localises to the perinuclear region. The polypeptide is Hypersensitive to pore-forming toxin protein 40 (Caenorhabditis elegans).